The primary structure comprises 152 residues: Sec-independent protein translocase protein TatB (152 aa).

The helical transmembrane segment at 1–21 threads the bilayer; the sequence is MFDLGWSELLVIGVVALIVVG.

Belongs to the TatB family. As to quaternary structure, the Tat system comprises two distinct complexes: a TatABC complex, containing multiple copies of TatA, TatB and TatC subunits, and a separate TatA complex, containing only TatA subunits. Substrates initially bind to the TatABC complex, which probably triggers association of the separate TatA complex to form the active translocon.

It is found in the cell inner membrane. Part of the twin-arginine translocation (Tat) system that transports large folded proteins containing a characteristic twin-arginine motif in their signal peptide across membranes. Together with TatC, TatB is part of a receptor directly interacting with Tat signal peptides. TatB may form an oligomeric binding site that transiently accommodates folded Tat precursor proteins before their translocation. The polypeptide is Sec-independent protein translocase protein TatB (Ruegeria pomeroyi (strain ATCC 700808 / DSM 15171 / DSS-3) (Silicibacter pomeroyi)).